The chain runs to 146 residues: Hemoglobin subunit beta-1/2 (146 aa).

One can recognise a Globin domain in the interval E2–H146. Residues H63 and H92 each contribute to the heme b site.

Belongs to the globin family. As to quaternary structure, hb1 is a heterotetramer of two alpha-1 chains and two beta chains. Hb2 is a heterotetramer of two alpha-2 chains and two beta chains. In terms of tissue distribution, red blood cells.

Involved in oxygen transport from gills to the various peripheral tissues. The protein is Hemoglobin subunit beta-1/2 of Trematomus newnesi (Dusky notothen).